A 99-amino-acid chain; its full sequence is MAAAAASRGIGAKLGLREIRIHLCQRSPGSRGVRDFIEKRYVELKKANSDLPILIRECSDVQPKLWARYAFGQETNVPLNNFSADQVTRALENVLSGKA.

Ala2 carries the post-translational modification N-acetylalanine. An intrachain disulfide couples Cys24 to Cys58. Lys64 carries the post-translational modification N6-acetyllysine; alternate. Lys64 bears the N6-succinyllysine; alternate mark.

Belongs to the complex I NDUFA2 subunit family. Complex I is composed of 45 different subunits.

The protein resides in the mitochondrion inner membrane. Its function is as follows. Accessory subunit of the mitochondrial membrane respiratory chain NADH dehydrogenase (Complex I), that is believed not to be involved in catalysis. Complex I functions in the transfer of electrons from NADH to the respiratory chain. The immediate electron acceptor for the enzyme is believed to be ubiquinone. The sequence is that of NADH dehydrogenase [ubiquinone] 1 alpha subcomplex subunit 2 (NDUFA2) from Gorilla gorilla gorilla (Western lowland gorilla).